The primary structure comprises 205 residues: Small ribosomal subunit protein uS4 (205 aa).

Residues 18–46 (NIWGRPKSPVNRREYGPGQHGQRRKGKLS) form a disordered region. The 64-residue stretch at 94-157 (RRLDTVVFRA…KQLAIVLEAT (64 aa)) folds into the S4 RNA-binding domain.

The protein belongs to the universal ribosomal protein uS4 family. Part of the 30S ribosomal subunit. Contacts protein S5. The interaction surface between S4 and S5 is involved in control of translational fidelity.

One of the primary rRNA binding proteins, it binds directly to 16S rRNA where it nucleates assembly of the body of the 30S subunit. Functionally, with S5 and S12 plays an important role in translational accuracy. In Bradyrhizobium sp. (strain BTAi1 / ATCC BAA-1182), this protein is Small ribosomal subunit protein uS4.